Here is a 239-residue protein sequence, read N- to C-terminus: Cysteine-rich venom protein kaouthin-1 (239 aa).

Residues Met-1–Gly-18 form the signal peptide. The SCP domain maps to Val-37–Tyr-165. Disulfide bonds link Cys-74–Cys-152, Cys-91–Cys-166, Cys-147–Cys-163, Cys-185–Cys-192, Cys-188–Cys-197, Cys-201–Cys-234, Cys-210–Cys-228, and Cys-219–Cys-232. Positions Cys-201–Cys-234 constitute a ShKT domain.

It belongs to the CRISP family. Expressed by the venom gland.

It localises to the secreted. In terms of biological role, inhibits calcium-activated potassium channels (KCa), voltage-gated potassium channel (Kv), and the calcium release channel/ryanodine receptor (RyR). The protein is Cysteine-rich venom protein kaouthin-1 of Naja kaouthia (Monocled cobra).